The following is a 93-amino-acid chain: uncharacterized protein (93 aa).

The helical transmembrane segment at 20–40 (VYIYLCFSLMTIALICYLIHI) threads the bilayer. N-linked (GlcNAc...) asparagine; by host glycosylation is present at Asn78.

It belongs to the asfivirus KP93L family.

Its subcellular location is the host membrane. This is an uncharacterized protein from Ornithodoros (relapsing fever ticks).